Consider the following 94-residue polypeptide: Protein RESPONSE TO LOW SULFUR 1 (94 aa).

Residues 8-35 (VTVAAEEMDELRRRNIELSREVAEMKTE) adopt a coiled-coil conformation.

The polypeptide is Protein RESPONSE TO LOW SULFUR 1 (Arabidopsis thaliana (Mouse-ear cress)).